The following is a 1363-amino-acid chain: Vascular endothelial growth factor receptor 3 (1363 aa).

The N-terminal stretch at 1–24 is a signal peptide; the sequence is MQRGAALCLRLWLCLGLLDGLVSG. At 25–775 the chain is on the extracellular side; sequence YSMTPPTLNI…EGSEDKGSME (751 aa). Ig-like C2-type domains are found at residues 30-127, 151-213, 219-326, 331-415, 422-552, 555-671, and 678-764; these read PTLN…TAAS, KDAM…WGDQ, PFLV…TEVI, PFIS…ISLE, PQIH…FYVT, PDGF…KYLS, and PRLT…ASVA. 6 N-linked (GlcNAc...) asparagine glycosylation sites follow: asparagine 33, asparagine 104, asparagine 166, asparagine 251, asparagine 299, and asparagine 411. 2 cysteine pairs are disulfide-bonded: cysteine 51/cysteine 111 and cysteine 158/cysteine 206. A disulfide bridge connects residues cysteine 252 and cysteine 310. Cystine bridges form between cysteine 445-cysteine 534, cysteine 466-cysteine 486, and cysteine 578-cysteine 653. N-linked (GlcNAc...) asparagine glycans are attached at residues asparagine 515, asparagine 527, asparagine 594, asparagine 683, and asparagine 690. A disulfide bridge connects residues cysteine 699 and cysteine 751. Asparagine 758 is a glycosylation site (N-linked (GlcNAc...) asparagine). A helical membrane pass occupies residues 776-796; the sequence is IVILVGTGVIAVFFWVLLLLI. At 797 to 1363 the chain is on the cytoplasmic side; the sequence is FCNMRRPAHA…RVTFFTDNSY (567 aa). 3 positions are modified to phosphotyrosine; by SRC: tyrosine 830, tyrosine 833, and tyrosine 853. The Protein kinase domain maps to 845–1173; the sequence is LHLGRVLGYG…ELVEILGDLL (329 aa). ATP-binding positions include 851-859 and lysine 879; that span reads LGYGAFGKV. Aspartate 1037 functions as the Proton acceptor in the catalytic mechanism. Tyrosine 1063 is modified (phosphotyrosine; by autocatalysis and SRC). Phosphotyrosine; by autocatalysis is present on residues tyrosine 1068, tyrosine 1230, tyrosine 1231, and tyrosine 1265. The segment at 1291–1331 is disordered; sequence HRQESGFSCKGPGQNVAVTRAHPDSQGRRRRPERGARGGQV. Residues tyrosine 1333 and tyrosine 1337 each carry the phosphotyrosine; by autocatalysis and SRC modification. Phosphotyrosine; by autocatalysis is present on tyrosine 1363.

The protein belongs to the protein kinase superfamily. Tyr protein kinase family. CSF-1/PDGF receptor subfamily. Interacts with VEGFC and VEGFD. Monomer in the absence of bound VEGFC or VEGFD. Homodimer in the presence of bound VEGFC or VEGFD. Can also form a heterodimer with KDR. Interacts with PTPN14; the interaction is enhanced by stimulation with VEGFC. Interacts with CRK, GRB2, PTK2/FAK1, SHC1, PIK3R1 and PTPN11/SHP-2. Identified in a complex with SRC and ITGB1. In terms of processing, autophosphorylated on tyrosine residues upon ligand binding. Autophosphorylation occurs in trans, i.e. one subunit of the dimeric receptor phosphorylates tyrosine residues on the other subunit. Phosphorylation in response to H(2)O(2) is mediated by a process that requires SRC and PRKCD activity. Phosphorylation at Tyr-1068 is required for autophosphorylation at additional tyrosine residues. Phosphorylation at Tyr-1063 and Tyr-1337 is important for interaction with CRK and subsequent activation of MAPK8. Phosphorylation at Tyr-1230, Tyr-1231 and Tyr-1337 is important for interaction with GRB2 and subsequent activation of the AKT1 and MAPK1/ERK2 and/or MAPK3/ERK1 signaling pathways. In response to endothelial cell adhesion onto collagen, can also be phosphorylated in the absence of FLT4 kinase activity by SRC at Tyr-830, Tyr-833, Tyr-853, Tyr-1063, Tyr-1333, and Tyr-1337. As to expression, detected in endothelial cells (at protein level). Widely expressed. Detected in fetal spleen, lung and brain. Detected in adult liver, muscle, thymus, placenta, lung, testis, ovary, prostate, heart, and kidney.

The protein localises to the cell membrane. Its subcellular location is the cytoplasm. It is found in the nucleus. It localises to the secreted. It catalyses the reaction L-tyrosyl-[protein] + ATP = O-phospho-L-tyrosyl-[protein] + ADP + H(+). Its activity is regulated as follows. Present in an inactive conformation in the absence of bound ligand. Binding of VEGFC or VEGFD leads to dimerization and activation by autophosphorylation on tyrosine residues. Inhibited by MAZ51. In terms of biological role, tyrosine-protein kinase that acts as a cell-surface receptor for VEGFC and VEGFD, and plays an essential role in adult lymphangiogenesis and in the development of the vascular network and the cardiovascular system during embryonic development. Promotes proliferation, survival and migration of endothelial cells, and regulates angiogenic sprouting. Signaling by activated FLT4 leads to enhanced production of VEGFC, and to a lesser degree VEGFA, thereby creating a positive feedback loop that enhances FLT4 signaling. Modulates KDR signaling by forming heterodimers. The secreted isoform 3 may function as a decoy receptor for VEGFC and/or VEGFD and play an important role as a negative regulator of VEGFC-mediated lymphangiogenesis and angiogenesis. Binding of vascular growth factors to isoform 1 or isoform 2 leads to the activation of several signaling cascades; isoform 2 seems to be less efficient in signal transduction, because it has a truncated C-terminus and therefore lacks several phosphorylation sites. Mediates activation of the MAPK1/ERK2, MAPK3/ERK1 signaling pathway, of MAPK8 and the JUN signaling pathway, and of the AKT1 signaling pathway. Phosphorylates SHC1. Mediates phosphorylation of PIK3R1, the regulatory subunit of phosphatidylinositol 3-kinase. Promotes phosphorylation of MAPK8 at 'Thr-183' and 'Tyr-185', and of AKT1 at 'Ser-473'. In Homo sapiens (Human), this protein is Vascular endothelial growth factor receptor 3 (FLT4).